Here is a 120-residue protein sequence, read N- to C-terminus: uncharacterized protein (120 aa).

A signal peptide spans 1–18 (MRSWIPLLVLFAVLAVFA). The interval 20–99 (AGKSSESDES…GDNRVKRDGL (80 aa)) is disordered.

This is an uncharacterized protein from Caenorhabditis elegans.